Here is a 485-residue protein sequence, read N- to C-terminus: MPATETADKNTKSANSDTSGRVVRVTGPVVDVEFPRGSVPALFNALHAEITFEELAKTLTLEVAQHLGDNLVRTISLQPTDGLVRGVEVIDTGRSISVPVGQEVKGHVFNALGHCLDKPGYGEDFEHWSIHRKPPPFEELEPRTEMLETGLKVVDLLTPYVRGGKIALFGGAGVGKTVLIQEMINRIARNFGGTSVFAGVGERTREGNDLWVELQEANVLKDTALVFGQMDEPPGTRMRVALSALTMAEWFRDEAGQDVLLFIDNIFRFTQAGSEVSTLLGRMPSAVGYQPTLADEMGELQERITSTRGRSITSMQAVYVPADDYTDPAPATTFAHLDATTELSRSVFSKGIFPAVDPLASSSTILDPGVVGEEHYRVAQEVIRILQRYKDLQDIIAILGIDELSEEDKQLVNRARRIERFLSQNMMAAEQFTGQPGSTVPLKETIEAFDRLTKGEFDHVPEQAFFLIGGLDDLAKKAESLGAKL.

Positions 1-11 are enriched in basic and acidic residues; it reads MPATETADKNT. The tract at residues 1–20 is disordered; the sequence is MPATETADKNTKSANSDTSG. 170-177 is a binding site for ATP; it reads GGAGVGKT.

This sequence belongs to the ATPase alpha/beta chains family. As to quaternary structure, F-type ATPases have 2 components, CF(1) - the catalytic core - and CF(0) - the membrane proton channel. CF(1) has five subunits: alpha(3), beta(3), gamma(1), delta(1), epsilon(1). CF(0) has three main subunits: a(1), b(2) and c(9-12). The alpha and beta chains form an alternating ring which encloses part of the gamma chain. CF(1) is attached to CF(0) by a central stalk formed by the gamma and epsilon chains, while a peripheral stalk is formed by the delta and b chains.

It is found in the cell membrane. The enzyme catalyses ATP + H2O + 4 H(+)(in) = ADP + phosphate + 5 H(+)(out). Produces ATP from ADP in the presence of a proton gradient across the membrane. The catalytic sites are hosted primarily by the beta subunits. The protein is ATP synthase subunit beta of Mycobacterium avium (strain 104).